A 352-amino-acid chain; its full sequence is NAD(P)H pyrophosphatase NUDT13, mitochondrial (352 aa).

The N-terminal 20 residues, 1-20 (MSLYCGIACRRKFFWCYRLL), are a transit peptide targeting the mitochondrion. Residues 196–323 (PQMAPVAITL…PYTQQQNGTF (128 aa)) form the Nudix hydrolase domain. Residues 216–240 (RQSSFPKGMYSALAGFCDIGESVEE) carry the Nudix box motif.

It belongs to the Nudix hydrolase family. Mg(2+) serves as cofactor. Requires Mn(2+) as cofactor. Highly expressed in metastasis-suppressed chromosome 6 melanoma hybrids.

Its subcellular location is the mitochondrion. It catalyses the reaction NADH + H2O = reduced beta-nicotinamide D-ribonucleotide + AMP + 2 H(+). The catalysed reaction is NAD(+) + H2O = beta-nicotinamide D-ribonucleotide + AMP + 2 H(+). It carries out the reaction NADPH + H2O = reduced beta-nicotinamide D-ribonucleotide + adenosine 2',5'-bisphosphate + 2 H(+). In terms of biological role, NAD(P)H pyrophosphatase that hydrolyzes NADH into NMNH and AMP, and NADPH into NMNH and 2',5'-ADP. Has a marked preference for the reduced pyridine nucleotides. Does not show activity toward NAD-capped RNAs; the NAD-cap is an atypical cap present at the 5'-end of some RNAs. The sequence is that of NAD(P)H pyrophosphatase NUDT13, mitochondrial from Homo sapiens (Human).